The primary structure comprises 540 residues: O-phosphoserine--tRNA(Cys) ligase (540 aa).

Substrate contacts are provided by residues 188 to 190, 233 to 235, 275 to 276, and Asn-319; these read HMT, SAS, and YY.

This sequence belongs to the class-II aminoacyl-tRNA synthetase family. O-phosphoseryl-tRNA(Cys) synthetase subfamily. In terms of assembly, homotetramer. Interacts with SepCysS.

It catalyses the reaction tRNA(Cys) + O-phospho-L-serine + ATP = O-phospho-L-seryl-tRNA(Cys) + AMP + diphosphate. In terms of biological role, catalyzes the attachment of O-phosphoserine (Sep) to tRNA(Cys). In Methanococcus aeolicus (strain ATCC BAA-1280 / DSM 17508 / OCM 812 / Nankai-3), this protein is O-phosphoserine--tRNA(Cys) ligase.